A 123-amino-acid chain; its full sequence is Small ribosomal subunit protein uS12 (123 aa).

The interval 1-21 (MPTIEQLVRKGRQAKPKKSKT) is disordered. Residues 9–20 (RKGRQAKPKKSK) are compositionally biased toward basic residues. A 3-methylthioaspartic acid modification is found at aspartate 89.

The protein belongs to the universal ribosomal protein uS12 family. As to quaternary structure, part of the 30S ribosomal subunit. Contacts proteins S8 and S17. May interact with IF1 in the 30S initiation complex.

With S4 and S5 plays an important role in translational accuracy. In terms of biological role, interacts with and stabilizes bases of the 16S rRNA that are involved in tRNA selection in the A site and with the mRNA backbone. Located at the interface of the 30S and 50S subunits, it traverses the body of the 30S subunit contacting proteins on the other side and probably holding the rRNA structure together. The combined cluster of proteins S8, S12 and S17 appears to hold together the shoulder and platform of the 30S subunit. The sequence is that of Small ribosomal subunit protein uS12 from Bifidobacterium longum subsp. infantis (strain ATCC 15697 / DSM 20088 / JCM 1222 / NCTC 11817 / S12).